The following is a 350-amino-acid chain: Phenylalanine--tRNA ligase alpha subunit (350 aa).

Glu-262 is a binding site for Mg(2+).

It belongs to the class-II aminoacyl-tRNA synthetase family. Phe-tRNA synthetase alpha subunit type 1 subfamily. As to quaternary structure, tetramer of two alpha and two beta subunits. Mg(2+) serves as cofactor.

The protein resides in the cytoplasm. It carries out the reaction tRNA(Phe) + L-phenylalanine + ATP = L-phenylalanyl-tRNA(Phe) + AMP + diphosphate + H(+). The polypeptide is Phenylalanine--tRNA ligase alpha subunit (Thermus thermophilus (strain ATCC BAA-163 / DSM 7039 / HB27)).